A 361-amino-acid polypeptide reads, in one-letter code: Zinc transporter ZIP13 (361 aa).

Over 1–6 (MPGCPC) the chain is Lumenal. Residues 7-27 (PGCGMAGQRLLFLTVLALELL) form a helical membrane-spanning segment. The Cytoplasmic portion of the chain corresponds to 28-68 (ERAGGSQPALRSLGAAAACRLDNKESESWGALLSGERLDTW). A helical membrane pass occupies residues 69 to 89 (ICSLLGSLMVGLSGVFPLLVI). Residues 90-108 (PLEMGTLLQSEAGAWRLRQ) lie on the Lumenal side of the membrane. Residues 109–129 (LLSFALGGLLGNVFLHLLPEA) traverse the membrane as a helical segment. Residues 130–150 (WAYTCNITPGGEGQSLQRQQQ) lie on the Cytoplasmic side of the membrane. A helical transmembrane segment spans residues 151 to 171 (LGLWVIAGFLTFLALEKMFLN). Topologically, residues 172 to 232 (SKEDPSQAPS…TIDNFTHGLA (61 aa)) are lumenal. A helical membrane pass occupies residues 233-253 (VAASFLVSKKIGLLTTMAILL). The XEXPHE-motif motif lies at 254–259 (HEIPHE). The Cytoplasmic segment spans residues 254-275 (HEIPHEVGDFAILLRAGFDRWT). Residues 276–296 (AAKLQFSTALGGLLGACFAIC) form a helical membrane-spanning segment. The Lumenal portion of the chain corresponds to 297 to 306 (TQSPKGVEET). The helical transmembrane segment at 307 to 327 (VVWILPFTSGGFLYIALVNVL) threads the bilayer. The Cytoplasmic segment spans residues 328–339 (PDLLEEDDPWHS). Residues 340–360 (LQQVLLLCSGVLVMVLLSLFV) form a helical membrane-spanning segment. Position 361 (Glu-361) is a topological domain, lumenal.

Belongs to the ZIP transporter (TC 2.A.5) family. As to quaternary structure, homodimer. In terms of tissue distribution, highly expressed in some tissues such as bone and eye. Expressed in osteoblasts of tibia and of alveolar bone, in proliferative zone of growth plate, and in odontoblasts on the forming of the dentine of crown in molar tooth. Also expressed fibroblasts in reticular layer of dermis of skin.

The protein resides in the golgi apparatus membrane. It localises to the cytoplasmic vesicle membrane. It is found in the endoplasmic reticulum membrane. The enzyme catalyses Zn(2+)(in) = Zn(2+)(out). In terms of biological role, functions as a zinc transporter transporting Zn(2+) from the Golgi apparatus to the cytosol and thus influences the zinc level at least in areas of the cytosol. May regulate beige adipocyte differentiation. This Mus musculus (Mouse) protein is Zinc transporter ZIP13.